Reading from the N-terminus, the 875-residue chain is DNA gyrase subunit A (875 aa).

Residues 34 to 533 (LPDVRDGLKP…NSADINLEDL (500 aa)) form the Topo IIA-type catalytic domain. The active-site O-(5'-phospho-DNA)-tyrosine intermediate is Tyr122. The GyrA-box signature appears at 560 to 566 (QRRGGKG). A disordered region spans residues 841–875 (EPVDEEDLDTIDGSAAEGDDEIAPEVDVDDEPEEE). Acidic residues predominate over residues 857-875 (EGDDEIAPEVDVDDEPEEE).

It belongs to the type II topoisomerase GyrA/ParC subunit family. As to quaternary structure, heterotetramer, composed of two GyrA and two GyrB chains. In the heterotetramer, GyrA contains the active site tyrosine that forms a transient covalent intermediate with DNA, while GyrB binds cofactors and catalyzes ATP hydrolysis.

It localises to the cytoplasm. It catalyses the reaction ATP-dependent breakage, passage and rejoining of double-stranded DNA.. A type II topoisomerase that negatively supercoils closed circular double-stranded (ds) DNA in an ATP-dependent manner to modulate DNA topology and maintain chromosomes in an underwound state. Negative supercoiling favors strand separation, and DNA replication, transcription, recombination and repair, all of which involve strand separation. Also able to catalyze the interconversion of other topological isomers of dsDNA rings, including catenanes and knotted rings. Type II topoisomerases break and join 2 DNA strands simultaneously in an ATP-dependent manner. This Shigella flexneri protein is DNA gyrase subunit A.